A 350-amino-acid polypeptide reads, in one-letter code: uncharacterized protein (350 aa).

The interval 330-350 (RHPGDLRSEPHYRPSAKLAEF) is disordered. The segment covering 331-341 (HPGDLRSEPHY) has biased composition (basic and acidic residues).

This is an uncharacterized protein from Mycobacterium tuberculosis.